Here is a 70-residue protein sequence, read N- to C-terminus: UPF0352 protein Sfri_2492 (70 aa).

This sequence belongs to the UPF0352 family.

In Shewanella frigidimarina (strain NCIMB 400), this protein is UPF0352 protein Sfri_2492.